Consider the following 194-residue polypeptide: Peptidyl-tRNA hydrolase (194 aa).

TRNA is bound at residue His17. His22 serves as the catalytic Proton acceptor. 3 residues coordinate tRNA: Phe68, Asn70, and Asn116.

The protein belongs to the PTH family. Monomer.

It is found in the cytoplasm. It carries out the reaction an N-acyl-L-alpha-aminoacyl-tRNA + H2O = an N-acyl-L-amino acid + a tRNA + H(+). In terms of biological role, hydrolyzes ribosome-free peptidyl-tRNAs (with 1 or more amino acids incorporated), which drop off the ribosome during protein synthesis, or as a result of ribosome stalling. Functionally, catalyzes the release of premature peptidyl moieties from peptidyl-tRNA molecules trapped in stalled 50S ribosomal subunits, and thus maintains levels of free tRNAs and 50S ribosomes. The protein is Peptidyl-tRNA hydrolase of Xanthomonas oryzae pv. oryzae (strain MAFF 311018).